A 277-amino-acid polypeptide reads, in one-letter code: Undecaprenyl-diphosphatase (277 aa).

8 helical membrane-spanning segments follow: residues 1–21 (MDII…FLPV), 38–58 (SSLA…LWFF), 93–113 (LVWY…LFES), 118–138 (LFAG…TILY), 168–188 (AILP…VIGL), 191–211 (EFAA…AFVV), 222–242 (FNAL…YLAI), and 256–276 (IFAY…ITHL).

It belongs to the UppP family.

It is found in the cell membrane. The catalysed reaction is di-trans,octa-cis-undecaprenyl diphosphate + H2O = di-trans,octa-cis-undecaprenyl phosphate + phosphate + H(+). Functionally, catalyzes the dephosphorylation of undecaprenyl diphosphate (UPP). This chain is Undecaprenyl-diphosphatase, found in Methanobrevibacter smithii (strain ATCC 35061 / DSM 861 / OCM 144 / PS).